We begin with the raw amino-acid sequence, 644 residues long: Exoribonuclease 2 (644 aa).

In terms of domain architecture, RNB spans 189–516 (RRDLTALDFV…NHRLLKAIIK (328 aa)). In terms of domain architecture, S1 motif spans 561–643 (DTRFAAEILD…ETRSIIARPA (83 aa)).

This sequence belongs to the RNR ribonuclease family. RNase II subfamily.

The protein resides in the cytoplasm. The catalysed reaction is Exonucleolytic cleavage in the 3'- to 5'-direction to yield nucleoside 5'-phosphates.. Functionally, involved in mRNA degradation. Hydrolyzes single-stranded polyribonucleotides processively in the 3' to 5' direction. This Klebsiella pneumoniae (strain 342) protein is Exoribonuclease 2.